A 447-amino-acid chain; its full sequence is Putative metabolite transport protein HI_0418 (447 aa).

At 1–28 the chain is on the cytoplasmic side; it reads MCKPQQKHYGRQVMNTQNSLKQVATATM. Residues 29–49 traverse the membrane as a helical segment; that stretch reads VGTAIEYFDNYIYAMAAVLVF. Over 50 to 63 the chain is Periplasmic; it reads NHQFFHAVDPLSGQ. A helical membrane pass occupies residues 64-84; it reads IAALSTLALTFIARPLGAILF. Residues 85–96 lie on the Cytoplasmic side of the membrane; it reads GHFGDRFGRKNT. Residues 97-117 form a helical membrane-spanning segment; the sequence is FVMSLLLMGISTVVIGLLPTY. The Periplasmic segment spans residues 118–119; sequence DS. The chain crosses the membrane as a helical span at residues 120-140; the sequence is IGIWATILLCLCRIGQGIGLG. Topologically, residues 141–167 are cytoplasmic; it reads GEWGGAALVAVENAPEGKRGWYGTFPQ. A helical membrane pass occupies residues 168–188; the sequence is LGAPLGLLLANGVFLGITAIF. Residues 189 to 194 lie on the Periplasmic side of the membrane; sequence GQEAMT. A helical transmembrane segment spans residues 195–215; the sequence is EWAWRIPFLSSVILVAIGLYV. The Cytoplasmic segment spans residues 216 to 249; that stretch reads RLKLTEAPIFLAALNKPKPKRLPMLEVVTTHFKP. Residues 250-270 traverse the membrane as a helical segment; the sequence is FFLGMLVCIAGYVLFYIMIAF. Over 271–295 the chain is Periplasmic; that stretch reads SQIYAKSAPTVSEAGYAMGLGFSPQ. Residues 296 to 316 form a helical membrane-spanning segment; it reads IFTALLMASAVSLAITIAASG. The Cytoplasmic portion of the chain corresponds to 317–325; sequence KYIDKIGRR. Residues 326-346 form a helical membrane-spanning segment; it reads TWLIWTTVGVAIFGLSLPLFL. The Periplasmic portion of the chain corresponds to 347-354; that stretch reads ENGTTTSL. The helical transmembrane segment at 355–375 threads the bilayer; the sequence is FWFLFIGMGLIGMGYGPLASF. Residues 376-390 are Cytoplasmic-facing; it reads LPELFPTHARYSGAS. A helical transmembrane segment spans residues 391–411; that stretch reads LTYNIAGLFGASVAAIIALPL. Over 412 to 418 the chain is Periplasmic; it reads NAHYGLK. The helical transmembrane segment at 419-439 threads the bilayer; the sequence is GVGIYLTLNAVLSLVGLWFIS. The Cytoplasmic portion of the chain corresponds to 440-447; sequence ETKDKLLS.

The protein belongs to the major facilitator superfamily. Metabolite:H+ Symporter (MHS) family (TC 2.A.1.6) family.

The protein resides in the cell inner membrane. This chain is Putative metabolite transport protein HI_0418, found in Haemophilus influenzae (strain ATCC 51907 / DSM 11121 / KW20 / Rd).